Here is a 217-residue protein sequence, read N- to C-terminus: Ras-related protein Rab-19 (217 aa).

9 residues coordinate GTP: Ser26, Val28, Gly29, Lys30, Thr31, Cys32, Tyr42, Glu44, and Thr49. Thr31 contacts Mg(2+). A Switch 1 motif is present at residues 39-54; that stretch reads SGVYMEAQQNTIGVDF. Mg(2+) contacts are provided by Thr49 and Asp72. The short motif at 74 to 89 is the Switch 2 element; the sequence is AGQERFRTITQSYYRS. GTP is bound by residues Gly75, Asn130, Lys131, Asp133, Ser161, Ala162, and Lys163. S-geranylgeranyl cysteine attachment occurs at residues Cys215 and Cys217. Cysteine methyl ester is present on Cys217.

This sequence belongs to the small GTPase superfamily. Rab family. The cofactor is Mg(2+).

The protein localises to the cell membrane. It catalyses the reaction GTP + H2O = GDP + phosphate + H(+). With respect to regulation, regulated by guanine nucleotide exchange factors (GEFs) which promote the exchange of bound GDP for free GTP. Regulated by GTPase activating proteins (GAPs) which increase the GTP hydrolysis activity. Inhibited by GDP dissociation inhibitors (GDIs). Its function is as follows. The small GTPases Rab are key regulators of intracellular membrane trafficking, from the formation of transport vesicles to their fusion with membranes. Rabs cycle between an inactive GDP-bound form and an active GTP-bound form that is able to recruit to membranes different set of downstream effectors directly responsible for vesicle formation, movement, tethering and fusion. The sequence is that of Ras-related protein Rab-19 (RAB19) from Bos taurus (Bovine).